A 121-amino-acid chain; its full sequence is Heimdall profilin (121 aa).

It belongs to the Asgard profilin family.

The protein resides in the cytoplasm. Its subcellular location is the cytoskeleton. In terms of biological role, binds to actin and affects the structure of the cytoskeleton. At high concentrations inhibits spontaneous rabbit actin nucleation. This strongly suggests this archaea has a profilin-regulated actin system, and actin-type genes can be identified in this organism. This chain is Heimdall profilin, found in Heimdallarchaeota archaeon (strain LC_2).